The following is a 668-amino-acid chain: DNA ligase (668 aa).

NAD(+) is bound by residues Asp-32–Asp-36, Ser-81–Leu-82, and Glu-111. The active-site N6-AMP-lysine intermediate is Lys-113. NAD(+) is bound by residues Arg-134, Glu-171, Lys-290, and Lys-314. Cys-408, Cys-411, Cys-426, and Cys-432 together coordinate Zn(2+). A BRCT domain is found at Glu-591–Ser-668.

The protein belongs to the NAD-dependent DNA ligase family. LigA subfamily. It depends on Mg(2+) as a cofactor. The cofactor is Mn(2+).

The enzyme catalyses NAD(+) + (deoxyribonucleotide)n-3'-hydroxyl + 5'-phospho-(deoxyribonucleotide)m = (deoxyribonucleotide)n+m + AMP + beta-nicotinamide D-nucleotide.. Its function is as follows. DNA ligase that catalyzes the formation of phosphodiester linkages between 5'-phosphoryl and 3'-hydroxyl groups in double-stranded DNA using NAD as a coenzyme and as the energy source for the reaction. It is essential for DNA replication and repair of damaged DNA. The protein is DNA ligase of Shewanella piezotolerans (strain WP3 / JCM 13877).